The sequence spans 1076 residues: Atos homolog protein A (1076 aa).

Residues 24-32 (ALLITEGRT) are transactivation domain 1 (TAD1). Disordered regions lie at residues 700–721 (ESMSSNKDSKRPKTCEQNTQLN) and 739–765 (SDQLKNEQDKQEDPTNEKSQNYSQRRS). Over residues 739-754 (SDQLKNEQDKQEDPTN) the composition is skewed to basic and acidic residues. Residues 878 to 935 (LLGNFEESVLNYRFDPLGIVDGFTAEVGASGAFCPTHLTLPVEVSFYSVSDDNAPSPY) form a required for macropage invasion region. The tract at residues 962-970 (FNPNKTVVK) is transactivation domain 2 (TAD2).

It belongs to the ATOS family.

The protein resides in the nucleus. Transcription regulator that syncronizes transcriptional and translational programs to promote macrophage invasion of tissues. In Homo sapiens (Human), this protein is Atos homolog protein A.